The chain runs to 258 residues: Glucosamine-6-phosphate deaminase (258 aa).

Asp65 functions as the Proton acceptor; for enolization step in the catalytic mechanism. Asp134 serves as the catalytic For ring-opening step. His136 (proton acceptor; for ring-opening step) is an active-site residue. Glu141 serves as the catalytic For ring-opening step.

This sequence belongs to the glucosamine/galactosamine-6-phosphate isomerase family. NagB subfamily.

It carries out the reaction alpha-D-glucosamine 6-phosphate + H2O = beta-D-fructose 6-phosphate + NH4(+). It functions in the pathway amino-sugar metabolism; N-acetylneuraminate degradation; D-fructose 6-phosphate from N-acetylneuraminate: step 5/5. Catalyzes the reversible isomerization-deamination of glucosamine 6-phosphate (GlcN6P) to form fructose 6-phosphate (Fru6P) and ammonium ion. This chain is Glucosamine-6-phosphate deaminase, found in Corynebacterium kroppenstedtii (strain DSM 44385 / JCM 11950 / CIP 105744 / CCUG 35717).